The primary structure comprises 571 residues: Glutamate--tRNA ligase (571 aa).

A 'HIGH' region motif is present at residues 110-120; sequence PNPNGPATLGS.

It belongs to the class-I aminoacyl-tRNA synthetase family. Glutamate--tRNA ligase type 2 subfamily.

The protein resides in the cytoplasm. It catalyses the reaction tRNA(Glu) + L-glutamate + ATP = L-glutamyl-tRNA(Glu) + AMP + diphosphate. In terms of biological role, catalyzes the attachment of glutamate to tRNA(Glu) in a two-step reaction: glutamate is first activated by ATP to form Glu-AMP and then transferred to the acceptor end of tRNA(Glu). In Methanosarcina mazei (strain ATCC BAA-159 / DSM 3647 / Goe1 / Go1 / JCM 11833 / OCM 88) (Methanosarcina frisia), this protein is Glutamate--tRNA ligase.